Here is a 169-residue protein sequence, read N- to C-terminus: Cell cycle link protein (169 aa).

The tract at residues 9 to 22 (LPEELREKIVHDHL) is binding to host SKP1 protein. Residues 110-114 (LSCRE) carry the LXCXE motif, interaction with host RBR motif.

It belongs to the nanovirus Clink protein family. Interacts with host SKP1. Interacts (via LXCXE domain) with host retinoblastoma-related protein 1 (RBR1). Interacts (via LXCXE domain) with retinoblastoma-related proteins (RBR).

Its function is as follows. Interacts with and disrupts the function of host retinoblastoma-related proteins RBR, which are key regulators of the cell cycle. Induces transcriptional activation of E2F-regulated S-phase and G2/M-phase-specific genes. Inactivation of the ability of RBR to arrest the cell cycle leads to the stimulation of viral DNA replication. In Faba bean necrotic yellows virus (isolate Egyptian EV1-93) (FBNYV), this protein is Cell cycle link protein (DNA-C).